Reading from the N-terminus, the 470-residue chain is Argininosuccinate lyase (470 aa).

This sequence belongs to the lyase 1 family. Argininosuccinate lyase subfamily.

It is found in the cytoplasm. It catalyses the reaction 2-(N(omega)-L-arginino)succinate = fumarate + L-arginine. The protein operates within amino-acid biosynthesis; L-arginine biosynthesis; L-arginine from L-ornithine and carbamoyl phosphate: step 3/3. This Leptospira interrogans serogroup Icterohaemorrhagiae serovar copenhageni (strain Fiocruz L1-130) protein is Argininosuccinate lyase.